The sequence spans 102 residues: UPF0213 protein in potE 3'region (102 aa).

One can recognise a GIY-YIG domain in the interval 6–81 (SPWHLYMLRL…KQLSKTQKER (76 aa)).

It belongs to the UPF0213 family.

This is UPF0213 protein in potE 3'region from Serratia liquefaciens.